A 232-amino-acid chain; its full sequence is Large ribosomal subunit protein uL1 (232 aa).

The protein belongs to the universal ribosomal protein uL1 family. As to quaternary structure, part of the 50S ribosomal subunit.

Functionally, binds directly to 23S rRNA. The L1 stalk is quite mobile in the ribosome, and is involved in E site tRNA release. In terms of biological role, protein L1 is also a translational repressor protein, it controls the translation of the L11 operon by binding to its mRNA. The polypeptide is Large ribosomal subunit protein uL1 (Bartonella quintana (strain Toulouse) (Rochalimaea quintana)).